A 208-amino-acid chain; its full sequence is Holliday junction branch migration complex subunit RuvA (208 aa).

A domain I region spans residues 1-69 (MIGFLQGYVV…EDQMVLFGFA (69 aa)). A domain II region spans residues 70–148 (VVAERDLFRQ…EWRDQAGLKT (79 aa)). A flexible linker region spans residues 149–159 (LPSAGPIDSVQ). The tract at residues 159–208 (QEDVEMTLLALGYTSQEVMRALQAVGQNTALAKNSDTEAWIREAIAWLSQ) is domain III.

It belongs to the RuvA family. In terms of assembly, homotetramer. Forms an RuvA(8)-RuvB(12)-Holliday junction (HJ) complex. HJ DNA is sandwiched between 2 RuvA tetramers; dsDNA enters through RuvA and exits via RuvB. An RuvB hexamer assembles on each DNA strand where it exits the tetramer. Each RuvB hexamer is contacted by two RuvA subunits (via domain III) on 2 adjacent RuvB subunits; this complex drives branch migration. In the full resolvosome a probable DNA-RuvA(4)-RuvB(12)-RuvC(2) complex forms which resolves the HJ.

Its subcellular location is the cytoplasm. The RuvA-RuvB-RuvC complex processes Holliday junction (HJ) DNA during genetic recombination and DNA repair, while the RuvA-RuvB complex plays an important role in the rescue of blocked DNA replication forks via replication fork reversal (RFR). RuvA specifically binds to HJ cruciform DNA, conferring on it an open structure. The RuvB hexamer acts as an ATP-dependent pump, pulling dsDNA into and through the RuvAB complex. HJ branch migration allows RuvC to scan DNA until it finds its consensus sequence, where it cleaves and resolves the cruciform DNA. This chain is Holliday junction branch migration complex subunit RuvA, found in Acaryochloris marina (strain MBIC 11017).